A 517-amino-acid polypeptide reads, in one-letter code: Serine hydroxymethyltransferase 1, mitochondrial (517 aa).

A mitochondrion-targeting transit peptide spans 1 to 30 (MAMAMALRRLSSSIDKPIRPLIRSTSCYMS). Lys-286 carries the N6-(pyridoxal phosphate)lysine modification.

This sequence belongs to the SHMT family. In terms of assembly, homotetramer. Interacts with GLU1. Interacts with UBP16. It depends on pyridoxal 5'-phosphate as a cofactor. Post-translationally, ubiquitinated. Ubiquitous. Mostly expressed in leaves, less abundant in stems, flowers and siliques, and barely detectable in roots.

Its subcellular location is the mitochondrion. The protein resides in the cytoplasm. It catalyses the reaction (6R)-5,10-methylene-5,6,7,8-tetrahydrofolate + glycine + H2O = (6S)-5,6,7,8-tetrahydrofolate + L-serine. The protein operates within one-carbon metabolism; tetrahydrofolate interconversion. Functions in the photorespiratory pathway in catalyzing the interconversion of serine and glycine. Involved in controlling cell damage caused by abiotic stress, such as high light and salt and the hypersensitive defense response of plants. The protein is Serine hydroxymethyltransferase 1, mitochondrial of Arabidopsis thaliana (Mouse-ear cress).